A 476-amino-acid chain; its full sequence is Zinc metalloproteinase/disintegrin (476 aa).

The signal sequence occupies residues Met-1–Ser-20. Positions Ile-21–Gln-192 are excised as a propeptide. The residue at position 193 (Gln-193) is a Pyrrolidone carboxylic acid. Residues Arg-198–Pro-393 enclose the Peptidase M12B domain. Ca(2+) is bound by residues Glu-201 and Asp-285. 3 disulfides stabilise this stretch: Cys-309–Cys-388, Cys-348–Cys-372, and Cys-350–Cys-355. His-334 is a Zn(2+) binding site. Residue Glu-335 is part of the active site. Zn(2+) is bound by residues His-338 and His-344. Cys-388 and Asn-391 together coordinate Ca(2+). The propeptide occupies Leu-394 to Leu-403. The Disintegrin domain maps to Thr-395–Ala-476. 6 disulfides stabilise this stretch: Cys-409/Cys-424, Cys-411/Cys-419, Cys-418/Cys-441, Cys-432/Cys-438, Cys-437/Cys-462, and Cys-450/Cys-469. The Cell attachment site motif lies at Arg-454–Asp-456.

The protein belongs to the venom metalloproteinase (M12B) family. P-II subfamily. P-IIa sub-subfamily. Monomer (metalloprotease). Zn(2+) is required as a cofactor. In terms of processing, the N-terminus is blocked. Post-translationally, not glycosylated. Expressed by the venom gland.

The protein localises to the secreted. Inhibited by EDTA, and 1,10-phenanthroline, but not by PMSF. Its function is as follows. Non-hemorrhagic proteinase that activates prothrombin (F2) calcium-independently. Activates factor X (F10) and hydrolyzes the Aalpha-chain and more slowly the Bbeta-chain of fibrin and fibrinogen without affecting the gamma chain. It induces neither detachment nor apoptosis of human endothelial cells and is also not able to trigger an endothelial pro-inflammatory cell response. Nitric oxide and prostacyclin levels released by endothelial cells are significantly increased after treatment with insularinase A. Functionally, inhibits ADP-induced platelet aggregation (IC(50)=0.8 uM for native protein). Interestingly, inhibits the adhesion of HUVECs to immobilized fibrinogen at very low concentrations (IC(50)=36 nM). In Bothrops insularis (Golden lancehead), this protein is Zinc metalloproteinase/disintegrin.